The sequence spans 320 residues: MTQYLDFEKPLAEIEGKAEELRALARANEEMDVAEEAAALDAKAAKLLDELYRDLTPWRKCQVARHPERPHCRDYVDALFTEYTPLAGDRNFADDLAVMGGLARFNDRPVMVIGHEKGSDTKSRIAHNFGMARPEGYRKAVRLIEMAGRFGLPVVTLVDTAGAYPGKGAEERGQSEAIARSTEMCLRAGVPLVSVIIGEGGSGGAVAFATANRVAMLEHSIYSVISPEGCASILWKNAEKMREAAEALRLTAQDLLKLGVVDRVIPEPRGGAHRDKTAAMEAVRGAIAAMLKELDGKSAEALIKDRRKKFLDIGSKGLAA.

Residues 39-293 (ALDAKAAKLL…RGAIAAMLKE (255 aa)) enclose the CoA carboxyltransferase C-terminal domain.

This sequence belongs to the AccA family. Acetyl-CoA carboxylase is a heterohexamer composed of biotin carboxyl carrier protein (AccB), biotin carboxylase (AccC) and two subunits each of ACCase subunit alpha (AccA) and ACCase subunit beta (AccD).

The protein localises to the cytoplasm. It catalyses the reaction N(6)-carboxybiotinyl-L-lysyl-[protein] + acetyl-CoA = N(6)-biotinyl-L-lysyl-[protein] + malonyl-CoA. It participates in lipid metabolism; malonyl-CoA biosynthesis; malonyl-CoA from acetyl-CoA: step 1/1. Component of the acetyl coenzyme A carboxylase (ACC) complex. First, biotin carboxylase catalyzes the carboxylation of biotin on its carrier protein (BCCP) and then the CO(2) group is transferred by the carboxyltransferase to acetyl-CoA to form malonyl-CoA. The polypeptide is Acetyl-coenzyme A carboxylase carboxyl transferase subunit alpha (Ruegeria pomeroyi (strain ATCC 700808 / DSM 15171 / DSS-3) (Silicibacter pomeroyi)).